We begin with the raw amino-acid sequence, 357 residues long: Protein MGF 360-14L (357 aa).

Belongs to the asfivirus MGF 360 family. Interacts with host IRF3 and TRIM21; these interactions mediates degradation of IRF3 through TRIM21 and ubiquitin-meditated proteolysis.

The protein localises to the host cytoplasm. Its function is as follows. Plays a role in virus cell tropism, and may be required for efficient virus replication in macrophages. Also inhibits the host cGAS/STING-mediated type I interferon production by inducing host IRF3 degradation through the proteasome pathway. This chain is Protein MGF 360-14L, found in Ornithodoros (relapsing fever ticks).